A 364-amino-acid polypeptide reads, in one-letter code: MREETREQAAPLRSGLTTGSCATATSLAAARLLLTGQRHDAVEITLPKGKVVQMRLEFCHLKGDMAEAGTLKDAGDDPDVTHGALLFSQVRLRAEPGVRFVAGAGVGTVTRPGLVLAVGEPAINPVPRKMISDHLLQLAGDCGYHGGFEVTVNVQGGEQLALKTMNPRLGILGGLSILGTSGIVRPFSCSAYIASIHQGIDVAHTNGYTHIAACTGNASEDTMRRVYNLPEIALIEMGDFVGAVLKHLRKVPVPRLTLCGGFGKISKLAAGHMDLHSRHSSIDLPQLAGWAAAIGADTALQQAIIAANTSQQALALAHAAGIALGDEVCRHALVFARSVVPAQVQVEVFAIDRQGGIVGKAGVA.

This sequence belongs to the CbiD family.

It carries out the reaction Co-precorrin-5B + S-adenosyl-L-methionine = Co-precorrin-6A + S-adenosyl-L-homocysteine. Its pathway is cofactor biosynthesis; adenosylcobalamin biosynthesis; cob(II)yrinate a,c-diamide from sirohydrochlorin (anaerobic route): step 6/10. Its function is as follows. Catalyzes the methylation of C-1 in cobalt-precorrin-5B to form cobalt-precorrin-6A. This chain is Cobalt-precorrin-5B C(1)-methyltransferase, found in Pseudomonas entomophila (strain L48).